Consider the following 209-residue polypeptide: High frequency lysogenization protein HflD homolog (209 aa).

The protein belongs to the HflD family.

The protein localises to the cytoplasm. It localises to the cell inner membrane. The sequence is that of High frequency lysogenization protein HflD homolog from Halorhodospira halophila (strain DSM 244 / SL1) (Ectothiorhodospira halophila (strain DSM 244 / SL1)).